The following is a 164-amino-acid chain: Peptidyl-prolyl cis-trans isomerase A-like 4A (164 aa).

Positions 7-163 (FFDITVDGKP…KKITIADCGQ (157 aa)) constitute a PPIase cyclophilin-type domain.

Belongs to the cyclophilin-type PPIase family. PPIase A subfamily. In terms of tissue distribution, highly expressed in brain, ovary and mammary gland. Moderately expressed in lung, salivary gland, kidney, skin, adipose tissue, intestine and spleen. Weakly expressed in skeletal muscle, liver and stomach. Expressed in pleiomorphic and undifferentiated liposarcomas, osteosarcomas and breast carcinomas.

It is found in the cytoplasm. The catalysed reaction is [protein]-peptidylproline (omega=180) = [protein]-peptidylproline (omega=0). PPIases accelerate the folding of proteins. It catalyzes the cis-trans isomerization of proline imidic peptide bonds in oligopeptides. The polypeptide is Peptidyl-prolyl cis-trans isomerase A-like 4A (Homo sapiens (Human)).